We begin with the raw amino-acid sequence, 442 residues long: Ribosomal protein uS12 methylthiotransferase RimO (442 aa).

The MTTase N-terminal domain occupies 5–117 (PSIGVVSLGC…VLDAIHAALP (113 aa)). Cysteine 14, cysteine 50, cysteine 79, cysteine 148, cysteine 152, and cysteine 155 together coordinate [4Fe-4S] cluster. In terms of domain architecture, Radical SAM core spans 134-371 (LTPPHYAYLK…MAVQEAISRQ (238 aa)). The 68-residue stretch at 374 to 441 (QRRVGQRQRV…AHDLYGMVVS (68 aa)) folds into the TRAM domain.

Belongs to the methylthiotransferase family. RimO subfamily. Requires [4Fe-4S] cluster as cofactor.

The protein localises to the cytoplasm. It catalyses the reaction L-aspartate(89)-[ribosomal protein uS12]-hydrogen + (sulfur carrier)-SH + AH2 + 2 S-adenosyl-L-methionine = 3-methylsulfanyl-L-aspartate(89)-[ribosomal protein uS12]-hydrogen + (sulfur carrier)-H + 5'-deoxyadenosine + L-methionine + A + S-adenosyl-L-homocysteine + 2 H(+). Functionally, catalyzes the methylthiolation of an aspartic acid residue of ribosomal protein uS12. This Acidithiobacillus ferrooxidans (strain ATCC 53993 / BNL-5-31) (Leptospirillum ferrooxidans (ATCC 53993)) protein is Ribosomal protein uS12 methylthiotransferase RimO.